The chain runs to 113 residues: Small ribosomal subunit protein uS17 (113 aa).

Belongs to the universal ribosomal protein uS17 family. As to quaternary structure, part of the 30S ribosomal subunit.

In terms of biological role, one of the primary rRNA binding proteins, it binds specifically to the 5'-end of 16S ribosomal RNA. In Sulfurisphaera tokodaii (strain DSM 16993 / JCM 10545 / NBRC 100140 / 7) (Sulfolobus tokodaii), this protein is Small ribosomal subunit protein uS17.